The primary structure comprises 262 residues: ATP synthase subunit a (262 aa).

The next 6 helical transmembrane spans lie at 24–44 (AVHLDTLFFSLLAGVIFLFVF), 84–104 (VIAPLALTIFCWVFIMNAIDL), 129–149 (DISATLGMSICVFFLILFYTV), 165–185 (PFNHWVFIPVNFILETVTLLA), 194–214 (LFGNMYAGELIFILIAVMYMA), and 228–248 (LVWAIFHILVITLQAFIFMML).

This sequence belongs to the ATPase A chain family. In terms of assembly, F-type ATPases have 2 components, CF(1) - the catalytic core - and CF(0) - the membrane proton channel. CF(1) has five subunits: alpha(3), beta(3), gamma(1), delta(1), epsilon(1). CF(0) has three main subunits: a(1), b(2) and c(9-12). The alpha and beta chains form an alternating ring which encloses part of the gamma chain. CF(1) is attached to CF(0) by a central stalk formed by the gamma and epsilon chains, while a peripheral stalk is formed by the delta and b chains.

It localises to the cell inner membrane. Key component of the proton channel; it plays a direct role in the translocation of protons across the membrane. In Actinobacillus pleuropneumoniae serotype 7 (strain AP76), this protein is ATP synthase subunit a.